The following is a 357-amino-acid chain: UDP-N-acetylglucosamine--N-acetylmuramyl-(pentapeptide) pyrophosphoryl-undecaprenol N-acetylglucosamine transferase (357 aa).

UDP-N-acetyl-alpha-D-glucosamine is bound by residues 11 to 13, asparagine 123, arginine 159, serine 187, isoleucine 241, 260 to 265, and glutamine 286; these read TGG and ALTVAE.

The protein belongs to the glycosyltransferase 28 family. MurG subfamily.

It localises to the cell inner membrane. The enzyme catalyses di-trans,octa-cis-undecaprenyl diphospho-N-acetyl-alpha-D-muramoyl-L-alanyl-D-glutamyl-meso-2,6-diaminopimeloyl-D-alanyl-D-alanine + UDP-N-acetyl-alpha-D-glucosamine = di-trans,octa-cis-undecaprenyl diphospho-[N-acetyl-alpha-D-glucosaminyl-(1-&gt;4)]-N-acetyl-alpha-D-muramoyl-L-alanyl-D-glutamyl-meso-2,6-diaminopimeloyl-D-alanyl-D-alanine + UDP + H(+). The protein operates within cell wall biogenesis; peptidoglycan biosynthesis. Functionally, cell wall formation. Catalyzes the transfer of a GlcNAc subunit on undecaprenyl-pyrophosphoryl-MurNAc-pentapeptide (lipid intermediate I) to form undecaprenyl-pyrophosphoryl-MurNAc-(pentapeptide)GlcNAc (lipid intermediate II). The protein is UDP-N-acetylglucosamine--N-acetylmuramyl-(pentapeptide) pyrophosphoryl-undecaprenol N-acetylglucosamine transferase of Aromatoleum aromaticum (strain DSM 19018 / LMG 30748 / EbN1) (Azoarcus sp. (strain EbN1)).